Reading from the N-terminus, the 185-residue chain is Large ribosomal subunit protein uL30 (185 aa).

It belongs to the universal ribosomal protein uL30 family. In terms of assembly, part of the 50S ribosomal subunit.

This Caldivirga maquilingensis (strain ATCC 700844 / DSM 13496 / JCM 10307 / IC-167) protein is Large ribosomal subunit protein uL30.